A 369-amino-acid polypeptide reads, in one-letter code: uncharacterized protein (369 aa).

Residues 1–35 (MQTNNPSYFFRSESALQDEKRKEEKSHNPNGNPRN) are disordered. Basic and acidic residues predominate over residues 17 to 27 (QDEKRKEEKSH). WD repeat units lie at residues 83–127 (GHSG…CVET), 130–169 (GHTD…SRLL), 174–213 (GHSR…GSQL), 220–260 (GHQS…HEET), 263–301 (EHPD…VKDI), and 304–341 (GHYE…DNNE).

This is an uncharacterized protein from Schizosaccharomyces pombe (strain 972 / ATCC 24843) (Fission yeast).